Reading from the N-terminus, the 491-residue chain is Protein nucleotidyltransferase YdiU (491 aa).

ATP contacts are provided by Gly-94, Gly-96, Arg-97, Lys-117, Asp-129, Gly-130, Arg-180, and Arg-187. Asp-256 functions as the Proton acceptor in the catalytic mechanism. Mg(2+) contacts are provided by Asn-257 and Asp-266. ATP is bound at residue Asp-266.

The protein belongs to the SELO family. Mg(2+) is required as a cofactor. Mn(2+) serves as cofactor.

The catalysed reaction is L-seryl-[protein] + ATP = 3-O-(5'-adenylyl)-L-seryl-[protein] + diphosphate. The enzyme catalyses L-threonyl-[protein] + ATP = 3-O-(5'-adenylyl)-L-threonyl-[protein] + diphosphate. It catalyses the reaction L-tyrosyl-[protein] + ATP = O-(5'-adenylyl)-L-tyrosyl-[protein] + diphosphate. It carries out the reaction L-histidyl-[protein] + UTP = N(tele)-(5'-uridylyl)-L-histidyl-[protein] + diphosphate. The catalysed reaction is L-seryl-[protein] + UTP = O-(5'-uridylyl)-L-seryl-[protein] + diphosphate. The enzyme catalyses L-tyrosyl-[protein] + UTP = O-(5'-uridylyl)-L-tyrosyl-[protein] + diphosphate. Functionally, nucleotidyltransferase involved in the post-translational modification of proteins. It can catalyze the addition of adenosine monophosphate (AMP) or uridine monophosphate (UMP) to a protein, resulting in modifications known as AMPylation and UMPylation. In Clostridium botulinum (strain ATCC 19397 / Type A), this protein is Protein nucleotidyltransferase YdiU.